The following is a 225-amino-acid chain: Ribose-5-phosphate isomerase A (225 aa).

Substrate is bound by residues 26–29 (TGST), 82–85 (DGAD), and 95–98 (KGGG). Glu-104 acts as the Proton acceptor in catalysis. Lys-122 contributes to the substrate binding site.

It belongs to the ribose 5-phosphate isomerase family. Homodimer.

The enzyme catalyses aldehydo-D-ribose 5-phosphate = D-ribulose 5-phosphate. The protein operates within carbohydrate degradation; pentose phosphate pathway; D-ribose 5-phosphate from D-ribulose 5-phosphate (non-oxidative stage): step 1/1. Its function is as follows. Catalyzes the reversible conversion of ribose-5-phosphate to ribulose 5-phosphate. This Streptococcus mutans serotype c (strain ATCC 700610 / UA159) protein is Ribose-5-phosphate isomerase A.